Here is a 193-residue protein sequence, read N- to C-terminus: Potassium-transporting ATPase KdpC subunit (193 aa).

Residues 7–27 (PMIVIFAVLAALTGLAYPAVM) traverse the membrane as a helical segment.

This sequence belongs to the KdpC family. As to quaternary structure, the system is composed of three essential subunits: KdpA, KdpB and KdpC.

The protein resides in the cell inner membrane. In terms of biological role, part of the high-affinity ATP-driven potassium transport (or Kdp) system, which catalyzes the hydrolysis of ATP coupled with the electrogenic transport of potassium into the cytoplasm. This subunit acts as a catalytic chaperone that increases the ATP-binding affinity of the ATP-hydrolyzing subunit KdpB by the formation of a transient KdpB/KdpC/ATP ternary complex. The protein is Potassium-transporting ATPase KdpC subunit of Paraburkholderia phymatum (strain DSM 17167 / CIP 108236 / LMG 21445 / STM815) (Burkholderia phymatum).